The chain runs to 177 residues: Protein GrpE (177 aa).

Basic and acidic residues-rich tracts occupy residues 1–19 (MAKHKHEEHPEDVEVKETV) and 29–41 (SPEKSELELANER). The interval 1–41 (MAKHKHEEHPEDVEVKETVETAEQAESASPEKSELELANER) is disordered.

This sequence belongs to the GrpE family. In terms of assembly, homodimer.

The protein localises to the cytoplasm. In terms of biological role, participates actively in the response to hyperosmotic and heat shock by preventing the aggregation of stress-denatured proteins, in association with DnaK and GrpE. It is the nucleotide exchange factor for DnaK and may function as a thermosensor. Unfolded proteins bind initially to DnaJ; upon interaction with the DnaJ-bound protein, DnaK hydrolyzes its bound ATP, resulting in the formation of a stable complex. GrpE releases ADP from DnaK; ATP binding to DnaK triggers the release of the substrate protein, thus completing the reaction cycle. Several rounds of ATP-dependent interactions between DnaJ, DnaK and GrpE are required for fully efficient folding. The sequence is that of Protein GrpE from Streptococcus gordonii (strain Challis / ATCC 35105 / BCRC 15272 / CH1 / DL1 / V288).